Here is a 542-residue protein sequence, read N- to C-terminus: CTP synthase (542 aa).

Residues 1–265 (MARYVFITGG…DDEVLAAFGI (265 aa)) are amidoligase domain. CTP is bound at residue Ser-13. Ser-13 lines the UTP pocket. ATP contacts are provided by residues 14–19 (SLGKGI) and Asp-71. Positions 71 and 139 each coordinate Mg(2+). CTP-binding positions include 146-148 (DIE), 186-191 (KTKPTQ), and Lys-222. Residues 186-191 (KTKPTQ) and Lys-222 each bind UTP. The 251-residue stretch at 291 to 541 (TIAIVGKYTG…IEAATEQSRL (251 aa)) folds into the Glutamine amidotransferase type-1 domain. Residue Gly-353 coordinates L-glutamine. Cys-380 functions as the Nucleophile; for glutamine hydrolysis in the catalytic mechanism. Residues 381-384 (FGMQ), Glu-404, and Arg-469 each bind L-glutamine. Catalysis depends on residues His-514 and Glu-516.

It belongs to the CTP synthase family. As to quaternary structure, homotetramer.

The enzyme catalyses UTP + L-glutamine + ATP + H2O = CTP + L-glutamate + ADP + phosphate + 2 H(+). It carries out the reaction L-glutamine + H2O = L-glutamate + NH4(+). It catalyses the reaction UTP + NH4(+) + ATP = CTP + ADP + phosphate + 2 H(+). Its pathway is pyrimidine metabolism; CTP biosynthesis via de novo pathway; CTP from UDP: step 2/2. Its activity is regulated as follows. Allosterically activated by GTP, when glutamine is the substrate; GTP has no effect on the reaction when ammonia is the substrate. The allosteric effector GTP functions by stabilizing the protein conformation that binds the tetrahedral intermediate(s) formed during glutamine hydrolysis. Inhibited by the product CTP, via allosteric rather than competitive inhibition. Its function is as follows. Catalyzes the ATP-dependent amination of UTP to CTP with either L-glutamine or ammonia as the source of nitrogen. Regulates intracellular CTP levels through interactions with the four ribonucleotide triphosphates. The chain is CTP synthase from Rhizobium etli (strain ATCC 51251 / DSM 11541 / JCM 21823 / NBRC 15573 / CFN 42).